The following is a 396-amino-acid chain: Elongation factor Tu 2 (396 aa).

Residues 10-206 form the tr-type G domain; sequence KLHVNVGTIG…ALDTFIPDPT (197 aa). Positions 19-26 are G1; the sequence is GHVDHGKT. 19 to 26 provides a ligand contact to GTP; that stretch reads GHVDHGKT. Mg(2+) is bound at residue T26. Residues 60–64 form a G2 region; the sequence is GITIS. The G3 stretch occupies residues 81 to 84; sequence DCPG. GTP contacts are provided by residues 81–85 and 136–139; these read DCPGH and NKAD. The segment at 136-139 is G4; that stretch reads NKAD. The tract at residues 174 to 176 is G5; the sequence is SAR.

This sequence belongs to the TRAFAC class translation factor GTPase superfamily. Classic translation factor GTPase family. EF-Tu/EF-1A subfamily. As to quaternary structure, monomer.

The protein localises to the cytoplasm. The enzyme catalyses GTP + H2O = GDP + phosphate + H(+). Its function is as follows. GTP hydrolase that promotes the GTP-dependent binding of aminoacyl-tRNA to the A-site of ribosomes during protein biosynthesis. This chain is Elongation factor Tu 2, found in Xanthomonas campestris pv. campestris (strain 8004).